The primary structure comprises 179 residues: ATP-dependent protease subunit HslV (179 aa).

Residue Thr-7 is part of the active site. The Na(+) site is built by Gly-162, Cys-165, and Thr-168.

This sequence belongs to the peptidase T1B family. HslV subfamily. A double ring-shaped homohexamer of HslV is capped on each side by a ring-shaped HslU homohexamer. The assembly of the HslU/HslV complex is dependent on binding of ATP.

Its subcellular location is the cytoplasm. The catalysed reaction is ATP-dependent cleavage of peptide bonds with broad specificity.. Allosterically activated by HslU binding. Functionally, protease subunit of a proteasome-like degradation complex believed to be a general protein degrading machinery. The polypeptide is ATP-dependent protease subunit HslV (Saccharophagus degradans (strain 2-40 / ATCC 43961 / DSM 17024)).